A 370-amino-acid chain; its full sequence is MLDIDVLRQQGALRLSIAFRAGKGVTALFGRSGAGKTSVISMVAGLSRPDGGRIVVDDRVLFDGAKGIDLAPEKRRVGYVFQEGRLFPHLTVRQNLAFGMNRVPAAERYVGEDDVVDLLGISALLDRRPAKLSGGEKQRVAIGRALLASPRILLMDEPLASLDAQRKDEVLPFIARLPRRFSIPILYVSHAMDEVLRLADTLVLIAEGQVAASGPLEEVLARPDIPDFAAQRDAGAVVAAKVAGRDIPFGATLLDTPAGLLRTRPIDLPLGTKVRVRIAAADISLALERPRMVSVQNILAATILAIGEPEDGRLSVDLDAGPPGGPPCRLWASITARARHDLGLVPGLRVHALIKAMSLLRDELVEHSPH.

The 232-residue stretch at methionine 1 to arginine 232 folds into the ABC transporter domain. Glycine 30–threonine 37 is a binding site for ATP. The Mop domain occupies methionine 292–glutamate 363.

This sequence belongs to the ABC transporter superfamily. Molybdate importer (TC 3.A.1.8) family. As to quaternary structure, the complex is composed of two ATP-binding proteins (ModC), two transmembrane proteins (ModB) and a solute-binding protein (ModA).

The protein localises to the cell inner membrane. It carries out the reaction molybdate(out) + ATP + H2O = molybdate(in) + ADP + phosphate + H(+). In terms of biological role, part of the ABC transporter complex ModABC involved in molybdenum import. Responsible for energy coupling to the transport system. This Rhodospirillum rubrum (strain ATCC 11170 / ATH 1.1.1 / DSM 467 / LMG 4362 / NCIMB 8255 / S1) protein is Molybdenum import ATP-binding protein ModC.